The primary structure comprises 40 residues: Photosystem II reaction center protein J (40 aa).

A helical membrane pass occupies residues 8-28; that stretch reads IPLWVVATIAGLGVITVVGIF.

This sequence belongs to the PsbJ family. In terms of assembly, PSII is composed of 1 copy each of membrane proteins PsbA, PsbB, PsbC, PsbD, PsbE, PsbF, PsbH, PsbI, PsbJ, PsbK, PsbL, PsbM, PsbT, PsbX, PsbY, PsbZ, Psb30/Ycf12, peripheral proteins PsbO, CyanoQ (PsbQ), PsbU, PsbV and a large number of cofactors. It forms dimeric complexes.

Its subcellular location is the cellular thylakoid membrane. In terms of biological role, one of the components of the core complex of photosystem II (PSII). PSII is a light-driven water:plastoquinone oxidoreductase that uses light energy to abstract electrons from H(2)O, generating O(2) and a proton gradient subsequently used for ATP formation. It consists of a core antenna complex that captures photons, and an electron transfer chain that converts photonic excitation into a charge separation. This Trichormus variabilis (strain ATCC 29413 / PCC 7937) (Anabaena variabilis) protein is Photosystem II reaction center protein J.